A 334-amino-acid chain; its full sequence is Tyrosine-protein kinase SRK3 (334 aa).

An SH2 domain is found at 1–42 (IRTLDDGGFYMANRISFPTLQNLVSHYMMDADGLAQRLSRPC). The Protein kinase domain occupies 66-321 (IQLQRKLGQG…LKNLLEDYYV (256 aa)). ATP is bound by residues 72 to 80 (LGQGNFGEV) and lysine 94. Aspartate 186 acts as the Proton acceptor in catalysis.

The protein belongs to the protein kinase superfamily. Tyr protein kinase family.

It is found in the cytoplasm. It catalyses the reaction L-tyrosyl-[protein] + ATP = O-phospho-L-tyrosyl-[protein] + ADP + H(+). This Spongilla lacustris (Freshwater sponge) protein is Tyrosine-protein kinase SRK3 (SRK3).